The following is a 404-amino-acid chain: MPTDEPSKRKSILPTIPTSLMLKKSNEALSDFERTFNDRVMDIFAENRRIDVEEFKKNAECFLNIIRSNKIDLNWGEGGESRYVTITRLMKILKTSPQSIKDLLPHNTVSNFVKITNYNLTIDITLLEELVRTVIHAEESYIKLLPFSENSTEISSYSLQDFVATHFIPIMIEEPENPVYYTAYAVGTIFFLLGARRRDCVYLKDLLASTLLLQLEECIHAENHCLSPPKIDVFTVAQFRTTLSEFRFLDSQRKGLLAPADLKFFRDGIFNEVFTKRIFEISITYEDGRIDFKAFVDFVTALKFRHTTASAKYHFEILDLKDDGLLDEEEIRSISSFQLQNLPDYVPEDNSVNPEVATAELRDMMRLNQNGITLEEFLANRMNSTFAGFLSNSDDYMKYERREQ.

Part of a complex consisting of a common heterodimeric core enzyme, composed of catalytic subunit let-92 and constant regulatory subunit paa-1, that associates with a variety of regulatory subunits which confer distinct properties to the holoenzyme. Interacts with rsa-2, spd-5 and tpxl-1.

Its subcellular location is the cytoplasm. The protein resides in the cytoskeleton. It is found in the microtubule organizing center. It localises to the centrosome. In terms of biological role, regulatory subunit of phosphatase let-92 which recruits let-92/paa-1 complex to the centrosomes, thereby regulating microtubule outgrowth from centrosomes and mitotic spindle assembly ensuring the stability of kinetochore microtubules. The polypeptide is Serine/threonine-protein phosphatase 2A regulatory subunit rsa-1 (Caenorhabditis elegans).